Consider the following 506-residue polypeptide: Photosystem II CP47 reaction center protein (506 aa).

The next 6 helical transmembrane spans lie at 21–36, 101–115, 140–156, 203–218, 237–252, and 457–472; these read SVHI…WAGS, ILFS…IWHW, GIHL…FGAF, IAAG…FHLS, VLSS…AFVV, and SFAL…HGAR.

Belongs to the PsbB/PsbC family. PsbB subfamily. As to quaternary structure, PSII is composed of 1 copy each of membrane proteins PsbA, PsbB, PsbC, PsbD, PsbE, PsbF, PsbH, PsbI, PsbJ, PsbK, PsbL, PsbM, PsbT, PsbX, PsbY, PsbZ, Psb30/Ycf12, at least 3 peripheral proteins of the oxygen-evolving complex and a large number of cofactors. It forms dimeric complexes. It depends on Binds multiple chlorophylls. PSII binds additional chlorophylls, carotenoids and specific lipids. as a cofactor.

It is found in the plastid. The protein localises to the chloroplast thylakoid membrane. Functionally, one of the components of the core complex of photosystem II (PSII). It binds chlorophyll and helps catalyze the primary light-induced photochemical processes of PSII. PSII is a light-driven water:plastoquinone oxidoreductase, using light energy to abstract electrons from H(2)O, generating O(2) and a proton gradient subsequently used for ATP formation. In Cucumis sativus (Cucumber), this protein is Photosystem II CP47 reaction center protein.